An 86-amino-acid polypeptide reads, in one-letter code: Omega-theraphotoxin-Hhn1f 1 (86 aa).

An N-terminal signal peptide occupies residues 1–21 (MKSIVFVALFGLALLAVVCSA). The propeptide occupies 22-50 (SEDAHKELLKEVVRAMVVDKTDAVQAEER). 3 cysteine pairs are disulfide-bonded: Cys-52–Cys-66, Cys-59–Cys-71, and Cys-65–Cys-78.

The protein belongs to the neurotoxin 10 (Hwtx-1) family. 17 (Hntx-9) subfamily. As to expression, expressed by the venom gland.

It is found in the secreted. Functionally, ion channel inhibitor. This chain is Omega-theraphotoxin-Hhn1f 1, found in Cyriopagopus hainanus (Chinese bird spider).